We begin with the raw amino-acid sequence, 352 residues long: MLTLSDFDFDLPPELIAQVALPERSASRLLEVDNPAGATGPARLIDRRFAELPDCIAAGDLLVFNDTKVLKARFLGQKASGGKIEVLVERLTGERTALAQIRASKSPQPGTTIRLADAFDVTVGERVEPFYTLHFPADCLTLIEQFGRLPLPPYIEHDPDATDETRYQTVFAQNPGAVAAPTAGLHFDEALLARLDAAGVERATLTLHVGAGTFQPVRVENLAEHKMHSEWYHLPQSLADKIAATRARGNRVIAVGTTSMRALEAAARDAEAAGRPLAAASTETDIFITPGYRFRVVDRLVTNFHLPKSTLLMLVSAFAGVETIREAYRHAIEARYRFFSYGDAMLLTRRDA.

This sequence belongs to the QueA family. As to quaternary structure, monomer.

The protein resides in the cytoplasm. It carries out the reaction 7-aminomethyl-7-carbaguanosine(34) in tRNA + S-adenosyl-L-methionine = epoxyqueuosine(34) in tRNA + adenine + L-methionine + 2 H(+). It participates in tRNA modification; tRNA-queuosine biosynthesis. Functionally, transfers and isomerizes the ribose moiety from AdoMet to the 7-aminomethyl group of 7-deazaguanine (preQ1-tRNA) to give epoxyqueuosine (oQ-tRNA). The sequence is that of S-adenosylmethionine:tRNA ribosyltransferase-isomerase from Paraburkholderia xenovorans (strain LB400).